Consider the following 588-residue polypeptide: MRKEAIYHRPADNFAYAYDSETLHLRLRTKKDDIDRVELLHGDPYDWQNGAWQFQMMPMRKTGSDELFDYWFAEVKPPYRRLRYGFVLYSGEEKLVYTEKGFYFEVPTDDTAYYFCFPFLHRVDLFEAPDWVKDTVWYQIFPERFANGNPSISPEGSRPWGSEDPTPTSFFGGDLQGIIDHLDYLVDLGITGIYLTPIFRSPSNHKYDTADYFEVDPHFGDKETLKTLIDRCHEKGIRVMLDAVFNHCGYEFAPFQDVWKNGESSKYKDWFHIHEFPLQTEPRPNYDTFRFVPQMPKLNTANPEVKRYLLDVATYWIREFDIDGWRLDVANEIDHEFWREFRQEVKALKPDVYILGEIWHDAMPWLRGDQFDAVMNYPFTDGVLRFFAKEEISARQFANQMMHVLHSYPNNVNEAAFNLLGSHDTSRILTVCGGDIRKVKLLFLFQLTFTGSPCIYYGDEIGMTGGNDPECRKCMVWDPMQQNKELHQHVKQLIALRKQYRSLRRGEISFLHADDEMNYLIYKKTDGDETVLVIINRSDQKADIPIPLDARGTWLVNLLTGERFAAEAETLCTSLPPYGFVLYAIEHW.

Residues asparagine 147, asparagine 149, serine 153, glycine 172, and aspartate 174 each coordinate Ca(2+). Histidine 247 and arginine 326 together coordinate substrate. Aspartate 328 (nucleophile) is an active-site residue. Residue glutamate 357 is the Proton donor of the active site. Residues 423–424 (HD), aspartate 468, and arginine 472 contribute to the substrate site.

Belongs to the glycosyl hydrolase 13 family. Homodimer. Ca(2+) is required as a cofactor.

It catalyses the reaction Hydrolysis of pullulan to panose (6-alpha-D-glucosylmaltose).. Hydrolyzes pullulan efficiently but only a small amount of starch. Endohydrolysis of 1,4-alpha-glucosidic linkages in pullulan to form panose. Also cleaves (1-6)-alpha-glucosidic linkages to form maltotriose. The protein is Neopullulanase (nplT) of Geobacillus stearothermophilus (Bacillus stearothermophilus).